Reading from the N-terminus, the 393-residue chain is tRNA(Met) cytidine acetate ligase (393 aa).

ATP-binding residues include G81, N142, and R167.

This sequence belongs to the TmcAL family.

The protein localises to the cytoplasm. The catalysed reaction is cytidine(34) in elongator tRNA(Met) + acetate + ATP = N(4)-acetylcytidine(34) in elongator tRNA(Met) + AMP + diphosphate. Functionally, catalyzes the formation of N(4)-acetylcytidine (ac(4)C) at the wobble position of elongator tRNA(Met), using acetate and ATP as substrates. First activates an acetate ion to form acetyladenylate (Ac-AMP) and then transfers the acetyl group to tRNA to form ac(4)C34. This chain is tRNA(Met) cytidine acetate ligase, found in Bacillus cereus (strain AH187).